Here is a 306-residue protein sequence, read N- to C-terminus: Agmatinase (306 aa).

Mn(2+) contacts are provided by His-126, Asp-149, His-151, Asp-153, Asp-230, and Asp-232.

The protein belongs to the arginase family. Agmatinase subfamily. The cofactor is Mn(2+).

It catalyses the reaction agmatine + H2O = urea + putrescine. The protein operates within amine and polyamine biosynthesis; putrescine biosynthesis via agmatine pathway; putrescine from agmatine: step 1/1. In terms of biological role, catalyzes the formation of putrescine from agmatine. This chain is Agmatinase, found in Serratia proteamaculans (strain 568).